The primary structure comprises 1031 residues: Toll-like receptor 9 (1031 aa).

The first 25 residues, 1–25, serve as a signal peptide directing secretion; the sequence is MGPCHGALQPLSLLVQAAMLAVALA. Topologically, residues 26-817 are extracellular; the sequence is QGTLPPFLPC…LCLDESLSWD (792 aa). Cysteine 35 and cysteine 45 are disulfide-bonded. 47 to 51 provides a ligand contact to DNA; the sequence is WLFLK. LRR repeat units follow at residues 62–85, 87–110, 122–147, 150–166, 167–190, 198–221, 223–242, 243–268, 283–306, 308–332, 333–356, 363–386, 390–413, 414–438, 470–494, 496–519, 520–543, 545–567, 574–598, 600–622, 627–650, 652–675, 676–699, 701–723, 724–747, and 749–772; these read RDNV…DFAQ, SNLQ…HFPC, VPTL…SLVS, LSRT…LTGL, HALR…ALEV, LGNL…LPPS, EYLL…DLAN, LTAL…CVEC, LSRL…WFRG, GNLT…AFQG, LAQL…HLTL, LLSL…TLQP, LPML…IFKD, FPGL…ATTG, CKNL…MFAQ, SRLQ…QFVP, LTSL…SFTE, PRLE…VGHN, LPTL…LCST, LWAL…LYLR, LRSL…TLGN, PKSL…SLTL, LPNL…SLPS, TQLQ…FFAL, ATRL…WFGF, and AGSL…AFVD. Residue asparagine 64 is glycosylated (N-linked (GlcNAc...) asparagine). DNA contacts are provided by residues 72 to 77 and 95 to 109; these read SNRIHH and KWNC…MHFP. An intrachain disulfide couples cysteine 98 to cysteine 110. An N-linked (GlcNAc...) asparagine glycan is attached at asparagine 129. Residues tyrosine 132, arginine 152, and 179 to 181 each bind DNA; that span reads YYK. Cysteine 178 and cysteine 184 are oxidised to a cystine. Asparagine 200 carries an N-linked (GlcNAc...) asparagine glycan. Position 208 (tyrosine 208) interacts with DNA. Asparagine 210 and asparagine 242 each carry an N-linked (GlcNAc...) asparagine glycan. Disulfide bonds link cysteine 255–cysteine 268 and cysteine 258–cysteine 265. Residue cysteine 258 is the site of S-palmitoyl cysteine attachment. Arginine 262 serves as a coordination point for DNA. The S-palmitoyl cysteine moiety is linked to residue cysteine 265. N-linked (GlcNAc...) asparagine glycans are attached at residues asparagine 309 and asparagine 340. Cysteine 470 and cysteine 500 are disulfide-bonded. Residues asparagine 472 and asparagine 513 are each glycosylated (N-linked (GlcNAc...) asparagine). Asparagine 567 is a glycosylation site (N-linked (GlcNAc...) asparagine). Asparagine 669 and asparagine 694 each carry an N-linked (GlcNAc...) asparagine glycan. Asparagine 731 is a glycosylation site (N-linked (GlcNAc...) asparagine). 2 cysteine pairs are disulfide-bonded: cysteine 764–cysteine 790 and cysteine 766–cysteine 809. The chain crosses the membrane as a helical span at residues 818–838; it reads CFGLSLLVVALGLAMPMLHHL. At 839–1031 the chain is on the cytoplasmic side; sequence CGWDLWYCFH…NFCRGPTMAE (193 aa). The TIR domain occupies 866–1011; sequence LSYDAFVVFD…SFWAQLGMAL (146 aa).

The protein belongs to the Toll-like receptor family. As to quaternary structure, monomer and homodimer. Exists as a monomer in the absence of unmethylated cytidine-phosphate-guanosine (CpG) ligand. Proteolytic processing of an insertion loop (Z-loop) is required for homodimerization upon binding to the unmethylated CpG ligand leading to its activation. Interacts with MYD88 via their respective TIR domains. Interacts with BTK. Interacts (via transmembrane domain) with UNC93B1. Interacts with CD300LH; the interaction may promote full activation of TLR9-triggered innate responses. Interacts with CNPY3 and HSP90B1; this interaction is required for proper folding in the endoplasmic reticulum. Interacts with SMPDL3B. Interacts with CD82; this interaction is essential for TLR9-dependent myddosome formation in response to CpG stimulation. In terms of processing, activated by proteolytic cleavage of the flexible loop between repeats LRR14 and LRR15 within the ectodomain. Cleavage requires UNC93B1. Proteolytically processed by first removing the majority of the ectodomain by either asparagine endopeptidase (AEP) or a cathepsin followed by a trimming event that is solely cathepsin mediated and required for optimal receptor signaling. Palmitoylated by ZDHHC3 in the Golgi regulates TLR9 trafficking from the Golgi to endosomes. Depalmitoylation by PPT1 controls the release of TLR9 from UNC93B1 in endosomes. As to expression, expressed in airway epithelium, vascular endothelium and inflammatory cells in blood vessels of the lungs (at protein level). Highly expressed in pulmonary intravascular macrophages (PIMs) and to a lesser extent in alveolar macrophages, neutrophiles, type-II alveolar epithelial cells and bronchial epithelial cells of the lungs (at protein level). High constitutive intracellular expression in leukocytes including polymorphonuclear leukocytes (PMNs), CD4 and CD8 T cells (at protein level). Expressed throughout the respiratory tract including larynx, upper, middle and lower trachea, and bronchus in isolated equine respiratory epithelial cells (ERECs) and in fully differentiated ERECs cultured at the air-fluid interface (AFI) (at protein level). Constitutively expressed in peripheral blood mononuclear cells (PBMCs), lymph nodes and spleen. The level of expression in PBMCs is about 2- to 3-fold higher than that in lymph nodes and spleen. Very low expression in liver, heart, lung, kidney, small intestine, colon and stomach. Low expression in the airway tissue epithelium of the larynx, upper trachea, middle tranchea, lower trachea, bronchus and spleen, and more abundant expression in mesenteric lymph node. Not expressed in fully differentiated bronchus epithelial cells cultured at the AFI for four weeks. Expressed in gingival tissue.

It is found in the endoplasmic reticulum membrane. Its subcellular location is the endosome. The protein localises to the lysosome. The protein resides in the cytoplasmic vesicle. It localises to the phagosome. It is found in the cell membrane. Its subcellular location is the cytoplasm. The protein localises to the nucleus. Its function is as follows. Key component of innate and adaptive immunity. TLRs (Toll-like receptors) control host immune response against pathogens through recognition of molecular patterns specific to microorganisms. TLR9 is a nucleotide-sensing TLR which is activated by unmethylated cytidine-phosphate-guanosine (CpG) dinucleotides. Acts via MYD88 and TRAF6, leading to NF-kappa-B activation, cytokine secretion and the inflammatory response. Upon CpG stimulation, induces B-cell proliferation, activation, survival and antibody production. This is Toll-like receptor 9 from Equus caballus (Horse).